The sequence spans 464 residues: Glycine receptor subunit alpha-3 (464 aa).

An N-terminal signal peptide occupies residues 1 to 33; sequence MAHVRHFRTLVSGFYFWEAALLLSLVATKETDS. The Extracellular segment spans residues 34–255; it reads ARSRSAPMSP…RFHLERQMGY (222 aa). Asn71 carries an N-linked (GlcNAc...) asparagine glycan. A disulfide bridge connects residues Cys171 and Cys185. Zn(2+) is bound by residues Glu225 and Asp227. The cysteines at positions 231 and 242 are disulfide-linked. 235-240 is a strychnine binding site; it reads YNTGKF. His248 is a Zn(2+) binding site. Residues 256–277 traverse the membrane as a helical segment; that stretch reads YLIQMYIPSLLIVILSWVSFWI. The Cytoplasmic segment spans residues 278-282; that stretch reads NMDAA. The helical transmembrane segment at 283 to 303 threads the bilayer; it reads PARVALGITTVLTMTTQSSGS. The Extracellular portion of the chain corresponds to 304-314; that stretch reads RASLPKVSYVK. A helical membrane pass occupies residues 315 to 335; it reads AIDIWMAVCLLFVFSALLEYA. The Cytoplasmic portion of the chain corresponds to 336–430; sequence AVNFVSRQHK…FIDRAKKIDT (95 aa). Phosphoserine occurs at positions 370 and 379. The chain crosses the membrane as a helical span at residues 431-451; sequence ISRACFPLAFLIFNIFYWVIY. At 452–464 the chain is on the extracellular side; it reads KILRHEDIHQQQD.

It belongs to the ligand-gated ion channel (TC 1.A.9) family. Glycine receptor (TC 1.A.9.3) subfamily. GLRA3 sub-subfamily. Homopentamer (in vitro). Heteropentamer composed of GLRA3 and GLRB. Both homopentamers and heteropentamers form functional ion channels, but their characteristics are subtly different. Post-translationally, phosphorylated by PKA; this causes down-regulation of channel activity. Widely distributed throughout the central nervous system.

The protein localises to the postsynaptic cell membrane. The protein resides in the perikaryon. It is found in the cell projection. It localises to the dendrite. Its subcellular location is the synapse. The protein localises to the cell membrane. The catalysed reaction is chloride(in) = chloride(out). Its function is as follows. Glycine receptors are ligand-gated chloride channels. Channel opening is triggered by extracellular glycine. Channel characteristics depend on the subunit composition; heteropentameric channels display faster channel closure. Plays an important role in the down-regulation of neuronal excitability. Contributes to the generation of inhibitory postsynaptic currents. Contributes to increased pain perception in response to increased prostaglandin E2 levels. Plays a role in cellular responses to ethanol. The polypeptide is Glycine receptor subunit alpha-3 (GLRA3) (Homo sapiens (Human)).